Here is a 133-residue protein sequence, read N- to C-terminus: Small ribosomal subunit protein uS8 (133 aa).

This sequence belongs to the universal ribosomal protein uS8 family. As to quaternary structure, part of the 30S ribosomal subunit. Contacts proteins S5 and S12.

In terms of biological role, one of the primary rRNA binding proteins, it binds directly to 16S rRNA central domain where it helps coordinate assembly of the platform of the 30S subunit. This Acaryochloris marina (strain MBIC 11017) protein is Small ribosomal subunit protein uS8.